Reading from the N-terminus, the 448-residue chain is B-cell lymphoma 3 protein homolog (448 aa).

Positions 1–54 are disordered; sequence MPRCPAGAMDEGPVDLRTRPKGTPGAALPLRKRPLRPASPEPATTRSPAGPLDA. Residue Ser-39 is modified to Phosphoserine. ANK repeat units follow at residues 129-161, 166-195, 199-228, 236-265, 270-299, 303-332, and 333-362; these read DGDTPLHIAVVQNNIAAVYRILSLFKLGSREVD, LRQTPLHLAVITTLPDMVRLLVTAGASPMA, HGQTAIHLACEHRSPSCLQALLDSATSGSV, EGLTALHVAVNTGCQEAVLLLLERGADIDA, SGRSPLIHAVENNSLNMVQLLLLHGANVNA, SGSSALHSASGRGLLPLVRTLVRSGADSGL, and KNCHNDTPLMVARSRRVIDILRGKASRAAS. Residues 356-448 form a disordered region; it reads KASRAASGSQ…VPPSPAPGSS (93 aa). Over residues 361-376 the composition is skewed to polar residues; that stretch reads ASGSQPEPSPDQSATN. A Phosphoserine modification is found at Ser-369. A compositionally biased stretch (low complexity) spans 377 to 398; sequence SPESSSRLSSNGLQSSPSSSPS. Phosphoserine; by GSK3 is present on residues Ser-396 and Ser-400. The segment covering 411 to 423 has biased composition (polar residues); it reads TPQNFFLPTTSTP. The span at 425–436 shows a compositional bias: low complexity; sequence FLPFPGVLRGPG. Over residues 437–448 the composition is skewed to pro residues; that stretch reads RPVPPSPAPGSS.

As to quaternary structure, component of a complex consisting of the NF-kappa-B p52-p52 homodimer and BCL3. Component of a complex consisting of the NF-kappa-B p50-p50 homodimer and BCL3. Interacts with N4BP2, COPS5 and PIR. Interacts with CYLD. In terms of processing, polyubiquitinated. Ubiquitination via 'Lys-63'-linked ubiquitin chains is required for nuclear accumulation. Deubiquitinated by CYLD, which acts on 'Lys-63'-linked ubiquitin chains. Deubiquitination by CYLD prevents nuclear accumulation. Activated by phosphorylation.

Its subcellular location is the nucleus. The protein localises to the cytoplasm. The protein resides in the perinuclear region. Functionally, contributes to the regulation of transcriptional activation of NF-kappa-B target genes. In the cytoplasm, inhibits the nuclear translocation of the NF-kappa-B p50 subunit. In the nucleus, acts as a transcriptional activator that promotes transcription of NF-kappa-B target genes. Contributes to the regulation of cell proliferation. This is B-cell lymphoma 3 protein homolog (Bcl3) from Mus musculus (Mouse).